A 401-amino-acid polypeptide reads, in one-letter code: Argininosuccinate synthase (401 aa).

An ATP-binding site is contributed by 9-17; sequence AYSGGLDTS. Tyr-86 is an L-citrulline binding site. Gly-116 is an ATP binding site. 3 residues coordinate L-aspartate: Thr-118, Asn-122, and Asp-123. Asn-122 is a binding site for L-citrulline. Arg-126, Ser-174, Ser-183, Glu-259, and Tyr-271 together coordinate L-citrulline.

This sequence belongs to the argininosuccinate synthase family. Type 1 subfamily. Homotetramer.

The protein resides in the cytoplasm. It carries out the reaction L-citrulline + L-aspartate + ATP = 2-(N(omega)-L-arginino)succinate + AMP + diphosphate + H(+). It participates in amino-acid biosynthesis; L-arginine biosynthesis; L-arginine from L-ornithine and carbamoyl phosphate: step 2/3. This chain is Argininosuccinate synthase, found in Bacillus cereus (strain B4264).